Consider the following 446-residue polypeptide: MITIKKGLDLPIAGVPTQVINDGNSITKVALLGEEYVGMRPTMHARVEDVVKKGQILFADKKNPGVIFTSPVSGKVVEINRGAKRVLQSVVIAVEGEEQVTFNSYAANQLASLDRDAIKQQLIDSGAWTALRTRPFSKVPAIDSETKAIFVTAMDTNPLAADAEVIINQQEDAFVAGLDLLSVLTGEKVYVCKKGGSLPRSSQGNVEEHVFDGPHPAGLAGTHMHYLYPVDLNNVAWSIGYQDVIAFGQLFLTGEIYSDRIVSLAGPAVNNPRLVRTITGASLLELTDSEVMPGEVRIISGSVLNGTQASGPHAYLGPYHQQVCVLREGREKEFLGWAVPGKNKFSVTRSFLSHVFSGQLFNMTTTTNGSDRAMVPIGSYERVMPLDMEPTMLLRDLCAGDVDSAARLGALELDEDDLGLCTYVCPGKYEYGPMLREILDTIEKEG.

Belongs to the NqrA family. Composed of six subunits; NqrA, NqrB, NqrC, NqrD, NqrE and NqrF.

The catalysed reaction is a ubiquinone + n Na(+)(in) + NADH + H(+) = a ubiquinol + n Na(+)(out) + NAD(+). NQR complex catalyzes the reduction of ubiquinone-1 to ubiquinol by two successive reactions, coupled with the transport of Na(+) ions from the cytoplasm to the periplasm. NqrA to NqrE are probably involved in the second step, the conversion of ubisemiquinone to ubiquinol. In Aliivibrio salmonicida (strain LFI1238) (Vibrio salmonicida (strain LFI1238)), this protein is Na(+)-translocating NADH-quinone reductase subunit A.